A 76-amino-acid chain; its full sequence is uncharacterized protein (76 aa).

Helical transmembrane passes span 9–29 (AIGIVVHLIFIAVTWWALQAV) and 45–65 (LLMILLTIAIGTAVANFFLDY).

It localises to the cell membrane. This is an uncharacterized protein from Bacillus subtilis (strain 168).